A 159-amino-acid chain; its full sequence is 2-C-methyl-D-erythritol 2,4-cyclodiphosphate synthase (159 aa).

2 residues coordinate a divalent metal cation: Asp10 and His12. 4-CDP-2-C-methyl-D-erythritol 2-phosphate contacts are provided by residues 10–12 (DVH) and 36–37 (HS). His44 contacts a divalent metal cation. Residues 58–60 (DIG), 63–67 (FPDTD), 102–108 (AQVPKMA), 134–137 (TTTE), Phe141, and Arg144 each bind 4-CDP-2-C-methyl-D-erythritol 2-phosphate.

Belongs to the IspF family. As to quaternary structure, homotrimer. The cofactor is a divalent metal cation.

It carries out the reaction 4-CDP-2-C-methyl-D-erythritol 2-phosphate = 2-C-methyl-D-erythritol 2,4-cyclic diphosphate + CMP. Its pathway is isoprenoid biosynthesis; isopentenyl diphosphate biosynthesis via DXP pathway; isopentenyl diphosphate from 1-deoxy-D-xylulose 5-phosphate: step 4/6. In terms of biological role, involved in the biosynthesis of isopentenyl diphosphate (IPP) and dimethylallyl diphosphate (DMAPP), two major building blocks of isoprenoid compounds. Catalyzes the conversion of 4-diphosphocytidyl-2-C-methyl-D-erythritol 2-phosphate (CDP-ME2P) to 2-C-methyl-D-erythritol 2,4-cyclodiphosphate (ME-CPP) with a corresponding release of cytidine 5-monophosphate (CMP). The protein is 2-C-methyl-D-erythritol 2,4-cyclodiphosphate synthase of Shewanella woodyi (strain ATCC 51908 / MS32).